The primary structure comprises 106 residues: ATP-dependent Clp protease adapter protein ClpS (106 aa).

It belongs to the ClpS family. Binds to the N-terminal domain of the chaperone ClpA.

Its function is as follows. Involved in the modulation of the specificity of the ClpAP-mediated ATP-dependent protein degradation. This Vibrio vulnificus (strain CMCP6) protein is ATP-dependent Clp protease adapter protein ClpS.